The primary structure comprises 405 residues: L-rhamnonate dehydratase (405 aa).

Substrate is bound by residues His-33 and Arg-59. Positions 226, 252, and 280 each coordinate Mg(2+). Catalysis depends on His-329, which acts as the Proton acceptor. Residue Glu-349 participates in substrate binding.

Belongs to the mandelate racemase/muconate lactonizing enzyme family. RhamD subfamily. As to quaternary structure, homooctamer; tetramer of dimers. It depends on Mg(2+) as a cofactor.

It catalyses the reaction L-rhamnonate = 2-dehydro-3-deoxy-L-rhamnonate + H2O. Functionally, catalyzes the dehydration of L-rhamnonate to 2-keto-3-deoxy-L-rhamnonate (KDR). In Escherichia coli O9:H4 (strain HS), this protein is L-rhamnonate dehydratase.